The chain runs to 469 residues: L-seryl-tRNA(Sec) selenium transferase (469 aa).

At lysine 295 the chain carries N6-(pyridoxal phosphate)lysine.

This sequence belongs to the SelA family. Pyridoxal 5'-phosphate is required as a cofactor.

The protein localises to the cytoplasm. The enzyme catalyses L-seryl-tRNA(Sec) + selenophosphate + H(+) = L-selenocysteinyl-tRNA(Sec) + phosphate. The protein operates within aminoacyl-tRNA biosynthesis; selenocysteinyl-tRNA(Sec) biosynthesis; selenocysteinyl-tRNA(Sec) from L-seryl-tRNA(Sec) (bacterial route): step 1/1. In terms of biological role, converts seryl-tRNA(Sec) to selenocysteinyl-tRNA(Sec) required for selenoprotein biosynthesis. This chain is L-seryl-tRNA(Sec) selenium transferase, found in Methylocella silvestris (strain DSM 15510 / CIP 108128 / LMG 27833 / NCIMB 13906 / BL2).